Reading from the N-terminus, the 318-residue chain is GTP cyclohydrolase MptA (318 aa).

Belongs to the GTP cyclohydrolase IV family. As to quaternary structure, homodimer. Requires Fe(2+) as cofactor.

The catalysed reaction is GTP + H2O = 7,8-dihydroneopterin 2',3'-cyclic phosphate + formate + diphosphate + H(+). It participates in cofactor biosynthesis; 5,6,7,8-tetrahydromethanopterin biosynthesis. Functionally, converts GTP to 7,8-dihydro-D-neopterin 2',3'-cyclic phosphate, the first intermediate in the biosynthesis of coenzyme methanopterin. The polypeptide is GTP cyclohydrolase MptA (Methanothermobacter thermautotrophicus (strain ATCC 29096 / DSM 1053 / JCM 10044 / NBRC 100330 / Delta H) (Methanobacterium thermoautotrophicum)).